The following is a 494-amino-acid chain: MDYKMDGYLDQQVPYTLANRSQGNGPLNRLLMATKRKYMDAELPPQESEDLFQDLSQLQETWLTEAQVPDSDEQFVPDFHSENSVAFHSPPVKIKKEPQSPGSDPSQSCSHKQSFSYPNGEQCLYASAYEQKRAAVAGAGGSKSSCPATPMSPMQHYSPKPTVGTRQESGYMNPPSSSQSHACHSHSYPMNPSSRFPSGSAEMCPPFASQGQALQRIDPAHASGGGGGGYHRQHSDPCLPYPPQQTFKQEYMDPLYDRAAHINGPQPQRFPPAHMMVKQEPTDYTYEPDVPGCPSMYHHNEGYSNPQHNSEGYMFENDSRVVPEKFEGEVKQEGGSVFREGAPYQRRGSLQLWQFLVALLDDPSNAHFIAWTGRGMEFKLIEPEEVARLWGIEKNRPAMNYDKLSRSLRYYYEKGIMQKVAGERYVYKFVCEPEALITLAFPDNQRPSLKAEFERYVNEEDTVPLSHLDEGVSYPPEPAATNMGPQPYSKGYMY.

Disordered regions lie at residues 82-113 and 139-201; these read ENSV…SHKQ and AGGS…SGSA. Residues 100-113 show a composition bias toward polar residues; that stretch reads SPGSDPSQSCSHKQ. Over residues 176–187 the composition is skewed to low complexity; it reads SSSQSHACHSHS. Residues 188-197 are compositionally biased toward polar residues; it reads YPMNPSSRFP. Positions 350 to 430 form a DNA-binding region, ETS; it reads LQLWQFLVAL…AGERYVYKFV (81 aa).

It belongs to the ETS family. Phosphorylated. As to expression, in the embryo, expressed ubiquitously until the late blastula stage, in the marginal zone of gastrula stages, in the presumptive forebrain and hindbrain and in the trunk region of early somite stages. In later stages, also expressed in Rohon-Beard neurons, epiphysis, lateral line placodes, pectoral fin buds, developing lens and heart.

It localises to the nucleus. In terms of biological role, transcriptional activator that binds to the (5'-CCGGA[AT]-3') motif. May control the acquisition of specific cell fates at an early stage during development of the somites and nervous system. May mediate the cellular effects of the fibroblast growth factors on embryogenesis. This Danio rerio (Zebrafish) protein is ETS translocation variant 4 (etv4).